Here is a 215-residue protein sequence, read N- to C-terminus: Enolase-phosphatase E1 (215 aa).

Asp11 and Glu13 together coordinate Mg(2+). Substrate is bound by residues 117 to 118 and Lys151; that span reads SS. Asp174 lines the Mg(2+) pocket.

It belongs to the HAD-like hydrolase superfamily. MasA/MtnC family. Monomer. It depends on Mg(2+) as a cofactor.

Its subcellular location is the cytoplasm. The protein resides in the nucleus. It carries out the reaction 5-methylsulfanyl-2,3-dioxopentyl phosphate + H2O = 1,2-dihydroxy-5-(methylsulfanyl)pent-1-en-3-one + phosphate. Its pathway is amino-acid biosynthesis; L-methionine biosynthesis via salvage pathway; L-methionine from S-methyl-5-thio-alpha-D-ribose 1-phosphate: step 3/6. The protein operates within amino-acid biosynthesis; L-methionine biosynthesis via salvage pathway; L-methionine from S-methyl-5-thio-alpha-D-ribose 1-phosphate: step 4/6. In terms of biological role, bifunctional enzyme that catalyzes the enolization of 2,3-diketo-5-methylthiopentyl-1-phosphate (DK-MTP-1-P) into the intermediate 2-hydroxy-3-keto-5-methylthiopentenyl-1-phosphate (HK-MTPenyl-1-P), which is then dephosphorylated to form the acireductone 1,2-dihydroxy-3-keto-5-methylthiopentene (DHK-MTPene). The protein is Enolase-phosphatase E1 (utr4) of Schizosaccharomyces japonicus (strain yFS275 / FY16936) (Fission yeast).